The primary structure comprises 508 residues: Protection of telomeres protein tpz1 (508 aa).

The interval 2 to 223 (SNCLKHPWLE…ENTTHGIYLE (222 aa)) is pot1-binding. 3 disordered regions span residues 159–178 (QEAS…NSRD), 235–269 (VSET…PSLP), and 282–358 (PPPF…QSHR). Residues 327 to 347 (STEQLNSSLTIERSQSIQSTD) are compositionally biased toward polar residues. The segment covering 348–358 (SKQRVETQSHR) has biased composition (basic and acidic residues). The interval 379 to 508 (TIDDSTGKLL…KKIEEFRNKS (130 aa)) is ccq1/poz1-binding.

Interacts with ccq1, pot1 and poz1.

Its subcellular location is the chromosome. The protein resides in the telomere. It is found in the nucleus. Telomeric DNA-binding protein that is required to protect the 3'-end telomeric overhang and involved in telomere length regulation. recruits poz1 and ccq1 to telomeres, regulating telomere length negatively and positively respectively. In Schizosaccharomyces pombe (strain 972 / ATCC 24843) (Fission yeast), this protein is Protection of telomeres protein tpz1 (tpz1).